Reading from the N-terminus, the 509-residue chain is Tyrosine-protein phosphatase non-receptor type substrate 1 (509 aa).

The N-terminal stretch at 1-31 is a signal peptide; it reads MEPAGPAPGRLGPLLFCLLLSASCFCAGASG. One can recognise an Ig-like V-type domain in the interval 32-138; that stretch reads KELKVTQADK…IVEPDTEIKS (107 aa). At 32–373 the chain is on the extracellular side; sequence KELKVTQADK…PDNNAYYNWN (342 aa). Asn54, Asn93, Asn169, Asn181, Asn205, Asn209, Asn242, Asn246, Asn271, Asn293, Asn312, Asn320, and Asn345 each carry an N-linked (GlcNAc...) asparagine glycan. A disulfide bond links Cys55 and Cys122. Ig-like C1-type domains lie at 150–248 and 255–349; these read PSSP…ANFS and PTLK…HTVR. Cys172 and Cys229 are joined by a disulfide. A disulfide bridge connects residues Cys274 and Cys332. A helical membrane pass occupies residues 374 to 394; the sequence is VFIGVGVACALLVVLLMAALY. Residues 395–509 lie on the Cytoplasmic side of the membrane; that stretch reads LLRIKQKKAK…EYASVQVQRK (115 aa). Tyr436 bears the Phosphotyrosine; by Tyr-kinases mark. The short motif at 436-439 is the SH2-binding element; it reads YADL. Positions 441–472 are disordered; sequence LPKEKKPAPRVPEPNNHTEYASIETGKLPRPE. The SH3-binding motif lies at 446-451; the sequence is KPAPRV. Phosphotyrosine; by Tyr-kinases is present on residues Tyr460, Tyr477, and Tyr501. 3 consecutive short sequence motifs (SH2-binding) follow at residues 460–463, 477–480, and 501–504; these read YASI, YADL, and YASV. Residues 485-509 form a disordered region; that stretch reads LNRAQPTPKPEPSFSEYASVQVQRK. Residues 500 to 509 show a composition bias toward polar residues; that stretch reads EYASVQVQRK.

In terms of assembly, binds PTPN11 when tyrosine-phosphorylated, except in macrophages, where it primarily binds PTPN6. Binds GRB2 in vitro. Binds FGR. Binds JAK2 irrespective of its phosphorylation status and forms a stable complex. Binds SCAP1 and/or SCAP2. The resulting complex recruits FYB1. Binds PTK2B. Interacts with TRIM2. In terms of processing, N-glycosylated. Phosphorylated on tyrosine residues in response to insulin, cell adhesion or epidermal growth factors. Dephosphorylated by PTPN11. In terms of tissue distribution, highly expressed in brain, spleen, lung, liver and kidney. Detected at lower levels in heart. Highly expressed in alveolar and peritoneal macrophages, and at lower levels in dendritic cells.

Its subcellular location is the membrane. In terms of biological role, immunoglobulin-like cell surface receptor for CD47. Acts as docking protein and induces translocation of PTPN6, PTPN11 and other binding partners from the cytosol to the plasma membrane. Supports adhesion of cerebellar neurons, neurite outgrowth and glial cell attachment. May play a key role in intracellular signaling during synaptogenesis and in synaptic function. Involved in the negative regulation of receptor tyrosine kinase-coupled cellular responses induced by cell adhesion, growth factors or insulin. Mediates negative regulation of phagocytosis, mast cell activation and dendritic cell activation. CD47 binding prevents maturation of immature dendritic cells and inhibits cytokine production by mature dendritic cells. Plays a role in antiviral immunity and limits new world arenavirus infection by decreasing virus internalization. Receptor for THBS1. Interaction with THBS1 stimulates phosphorylation of SIRPA. In response to THBS1, involved in ROS signaling in non-phagocytic cells, stimulating NADPH oxidase-derived ROS production. The chain is Tyrosine-protein phosphatase non-receptor type substrate 1 (Sirpa) from Rattus norvegicus (Rat).